Reading from the N-terminus, the 518-residue chain is Homoserine O-acetyltransferase (518 aa).

In terms of domain architecture, AB hydrolase-1 spans 69 to 468; sequence NVMVICHALT…DSPEGHDAFL (400 aa). Ser182 is an active-site residue. Residue Ser182 is the Nucleophile of the active site. Residues 267-365 form a disordered region; the sequence is RFGRNIPDPS…PNSVSDPFRP (99 aa). Basic and acidic residues predominate over residues 290–303; it reads PAEEHYDIHNEGFR. Positions 310 to 341 are enriched in low complexity; it reads RSSTTTSDAPPSPTRTSSTSSTDAITPASTTP. Active-site residues include Asp435 and His464.

This sequence belongs to the AB hydrolase superfamily. MetX family.

The enzyme catalyses L-homoserine + acetyl-CoA = O-acetyl-L-homoserine + CoA. It functions in the pathway amino-acid biosynthesis; L-methionine biosynthesis via de novo pathway; O-acetyl-L-homoserine from L-homoserine: step 1/1. Commits homoserine to the methionine biosynthesis pathway by catalyzing its O-acetylation. This chain is Homoserine O-acetyltransferase (MET2), found in Ascobolus immersus.